Here is a 94-residue protein sequence, read N- to C-terminus: Long neurotoxin LNTX37 (94 aa).

Positions 1 to 21 are cleaved as a signal peptide; that stretch reads MKTLLLTLVVVTIMCLDLGYT. 5 disulfides stabilise this stretch: C24-C43, C36-C64, C49-C53, C68-C79, and C80-C85.

Belongs to the three-finger toxin family. Long-chain subfamily. Type II alpha-neurotoxin sub-subfamily. Expressed by the venom gland.

The protein resides in the secreted. Its function is as follows. Binds with high affinity to muscular (alpha-1/CHRNA1) and neuronal (alpha-7/CHRNA7) nicotinic acetylcholine receptor (nAChR) and inhibits acetylcholine from binding to the receptor, thereby impairing neuromuscular and neuronal transmission. In Ophiophagus hannah (King cobra), this protein is Long neurotoxin LNTX37.